A 334-amino-acid chain; its full sequence is Aspartate carbamoyltransferase catalytic subunit (334 aa).

The carbamoyl phosphate site is built by Arg71 and Thr72. An L-aspartate-binding site is contributed by Lys99. The carbamoyl phosphate site is built by Arg121, His151, and Gln154. Residues Arg184 and Arg239 each contribute to the L-aspartate site. Residues Gly280 and Pro281 each coordinate carbamoyl phosphate.

This sequence belongs to the aspartate/ornithine carbamoyltransferase superfamily. ATCase family. Heterododecamer (2C3:3R2) of six catalytic PyrB chains organized as two trimers (C3), and six regulatory PyrI chains organized as three dimers (R2).

The enzyme catalyses carbamoyl phosphate + L-aspartate = N-carbamoyl-L-aspartate + phosphate + H(+). It participates in pyrimidine metabolism; UMP biosynthesis via de novo pathway; (S)-dihydroorotate from bicarbonate: step 2/3. In terms of biological role, catalyzes the condensation of carbamoyl phosphate and aspartate to form carbamoyl aspartate and inorganic phosphate, the committed step in the de novo pyrimidine nucleotide biosynthesis pathway. In Pseudomonas fluorescens (strain Pf0-1), this protein is Aspartate carbamoyltransferase catalytic subunit.